The primary structure comprises 134 residues: Putative pre-16S rRNA nuclease (134 aa).

It belongs to the YqgF nuclease family.

It localises to the cytoplasm. In terms of biological role, could be a nuclease involved in processing of the 5'-end of pre-16S rRNA. This chain is Putative pre-16S rRNA nuclease, found in Helicobacter pylori (strain ATCC 700392 / 26695) (Campylobacter pylori).